We begin with the raw amino-acid sequence, 173 residues long: Crossover junction endodeoxyribonuclease RuvC (173 aa).

Residues Asp8, Glu67, and Asp139 contribute to the active site. Residues Asp8, Glu67, and Asp139 each contribute to the Mg(2+) site.

It belongs to the RuvC family. In terms of assembly, homodimer which binds Holliday junction (HJ) DNA. The HJ becomes 2-fold symmetrical on binding to RuvC with unstacked arms; it has a different conformation from HJ DNA in complex with RuvA. In the full resolvosome a probable DNA-RuvA(4)-RuvB(12)-RuvC(2) complex forms which resolves the HJ. It depends on Mg(2+) as a cofactor.

It localises to the cytoplasm. The enzyme catalyses Endonucleolytic cleavage at a junction such as a reciprocal single-stranded crossover between two homologous DNA duplexes (Holliday junction).. Functionally, the RuvA-RuvB-RuvC complex processes Holliday junction (HJ) DNA during genetic recombination and DNA repair. Endonuclease that resolves HJ intermediates. Cleaves cruciform DNA by making single-stranded nicks across the HJ at symmetrical positions within the homologous arms, yielding a 5'-phosphate and a 3'-hydroxyl group; requires a central core of homology in the junction. The consensus cleavage sequence is 5'-(A/T)TT(C/G)-3'. Cleavage occurs on the 3'-side of the TT dinucleotide at the point of strand exchange. HJ branch migration catalyzed by RuvA-RuvB allows RuvC to scan DNA until it finds its consensus sequence, where it cleaves and resolves the cruciform DNA. This Citrobacter koseri (strain ATCC BAA-895 / CDC 4225-83 / SGSC4696) protein is Crossover junction endodeoxyribonuclease RuvC.